Reading from the N-terminus, the 389-residue chain is Tryptophan synthase beta chain 1 (389 aa).

At lysine 84 the chain carries N6-(pyridoxal phosphate)lysine.

It belongs to the TrpB family. Tetramer of two alpha and two beta chains. Requires pyridoxal 5'-phosphate as cofactor.

Its subcellular location is the plastid. The protein localises to the chloroplast. The catalysed reaction is (1S,2R)-1-C-(indol-3-yl)glycerol 3-phosphate + L-serine = D-glyceraldehyde 3-phosphate + L-tryptophan + H2O. It functions in the pathway amino-acid biosynthesis; L-tryptophan biosynthesis; L-tryptophan from chorismate: step 5/5. Its function is as follows. The beta subunit is responsible for the synthesis of L-tryptophan from indole and L-serine. The protein is Tryptophan synthase beta chain 1 (TSB1) of Zea mays (Maize).